A 176-amino-acid chain; its full sequence is MAPKAVLIGLPGSGKSTIGRRLAKALGVGFLDTDAAIEQRTGRPIAEIFATDGEREFRRIEEEVVRAALTEHDGVLSLGGGAVTSPGVREALAGHTVVYLEISATEGVRRTGGNTVRPLLAGPDRAEKYRALLAERSPLYRRAATIRVDTNRRNPGAVVRYIVSRLPATDACRAAT.

Residue 12 to 17 (GSGKST) participates in ATP binding. S16 is a Mg(2+) binding site. Residues D34, R58, and G80 each coordinate substrate. R117 is a binding site for ATP. A substrate-binding site is contributed by R136. Position 153 (R153) interacts with ATP.

This sequence belongs to the shikimate kinase family. Monomer. Requires Mg(2+) as cofactor.

It is found in the cytoplasm. The catalysed reaction is shikimate + ATP = 3-phosphoshikimate + ADP + H(+). It participates in metabolic intermediate biosynthesis; chorismate biosynthesis; chorismate from D-erythrose 4-phosphate and phosphoenolpyruvate: step 5/7. Functionally, catalyzes the specific phosphorylation of the 3-hydroxyl group of shikimic acid using ATP as a cosubstrate. The polypeptide is Shikimate kinase (Mycobacterium avium (strain 104)).